The primary structure comprises 443 residues: Thymidine phosphorylase (443 aa).

Belongs to the thymidine/pyrimidine-nucleoside phosphorylase family. In terms of assembly, homodimer.

It catalyses the reaction thymidine + phosphate = 2-deoxy-alpha-D-ribose 1-phosphate + thymine. It participates in pyrimidine metabolism; dTMP biosynthesis via salvage pathway; dTMP from thymine: step 1/2. Its function is as follows. The enzymes which catalyze the reversible phosphorolysis of pyrimidine nucleosides are involved in the degradation of these compounds and in their utilization as carbon and energy sources, or in the rescue of pyrimidine bases for nucleotide synthesis. This is Thymidine phosphorylase from Shewanella baltica (strain OS185).